Consider the following 663-residue polypeptide: Polyunsaturated fatty acid lipoxygenase ALOX15 (663 aa).

Residues 2–115 (GVYRIRVSTG…ILNLPEGTGC (114 aa)) form the PLAT domain. Residues 116-663 (TVVEDSQGLF…PSLVENSVAI (548 aa)) enclose the Lipoxygenase domain. Residues His-361, His-366, His-541, His-545, and Ile-663 each contribute to the Fe cation site.

Belongs to the lipoxygenase family. In terms of assembly, interacts with PEBP1; in response to IL13/interleukin-13, prevents the interaction of PEBP1 with RAF1 to activate the ERK signaling cascade. It depends on Fe cation as a cofactor. Found in pituitary and pineal glands as well as leukocytes, kidney, aorta, small intestine and cornea. Also expressed by resident peritoneal macrophages (at protein level).

It localises to the cytoplasm. It is found in the cytosol. Its subcellular location is the cell membrane. The protein resides in the lipid droplet. It catalyses the reaction (5Z,8Z,11Z,14Z)-eicosatetraenoate + O2 = (12S)-hydroperoxy-(5Z,8Z,10E,14Z)-eicosatetraenoate. The catalysed reaction is (5Z,8Z,11Z,14Z)-eicosatetraenoate + O2 = (15S)-hydroperoxy-(5Z,8Z,11Z,13E)-eicosatetraenoate. It carries out the reaction (9Z,12Z)-octadecadienoate + O2 = (13S)-hydroperoxy-(9Z,11E)-octadecadienoate. The enzyme catalyses (5Z,8Z,11Z,14Z)-eicosatetraenoate + 2 O2 = (14R,15S)-dihydroperoxy-(5Z,8Z,10E,12E)-eicosatetraenoate. It catalyses the reaction (5Z,8Z,11Z,14Z)-eicosatetraenoate + 2 O2 = (8S,15S)-dihydroperoxy-(5Z,9E,11Z,13E)-eicosatetraenoate. The catalysed reaction is (14S,15R)-epoxy-(5Z,8Z,11Z)-eicosatrienoate + O2 = (8S)-hydroperoxy-(14S,15R)-epoxy-(5Z,9E,11Z)-eicosatrienoate. It carries out the reaction (14S,15R)-epoxy-(5Z,8Z,11Z)-eicosatrienoate + O2 = (12S)-hydroperoxy-(14S,15R)-epoxy-(5Z,8Z,10E)-eicosatrienoate. The enzyme catalyses (14R,15S)-epoxy-(5Z,8Z,11Z)-eicosatrienoate + O2 = (5S)-hydroperoxy-(14R,15S)-epoxy-(6E,8Z,11Z)-eicosatrienoate. It catalyses the reaction (14R,15S)-epoxy-(5Z,8Z,11Z)-eicosatrienoate + O2 = (12S)-hydroperoxy-(14R,15S)-epoxy-(5Z,8Z,10E)-eicosatrienoate. The catalysed reaction is (15R)-hydroperoxy-(5Z,8Z,11Z,13E)-eicosatetraenoate = 15-oxo-(5Z,8Z,11Z,13E)-eicosatetraenoate + H2O. It carries out the reaction (15S)-hydroperoxy-(5Z,8Z,11Z,13E)-eicosatetraenoate = (14S,15S)-epoxy-(5Z,8Z,10E,12E)-eicosatetraenoate + H2O. The enzyme catalyses (12S)-hydroperoxy-(5Z,8Z,10E,14Z)-eicosatetraenoate = (8S)-hydroxy-(11S,12S)-epoxy-(5Z,9E,14Z)-eicosatrienoate. It catalyses the reaction (4Z,7Z,10Z,13Z,16Z)-docosapentaenoate + O2 = 14-hydroperoxy-(4Z,7Z,10Z,12E,16Z)-docosapentaenoate. The catalysed reaction is (7Z,10Z,13Z,16Z,19Z)-docosapentaenoate + O2 = 14-hydroperoxy-(7Z,10Z,12E,16Z,19Z)-docosapentaenoate. It carries out the reaction (4Z,7Z,10Z,13Z,16Z,19Z)-docosahexaenoate + O2 = (14S)-hydroperoxy-(4Z,7Z,10Z,12E,16Z,19Z)-docosahexaenoate. The enzyme catalyses (4Z,7Z,10Z,13Z,16Z,19Z)-docosahexaenoate + O2 = (17S)-hydroperoxy-(4Z,7Z,10Z,13Z,15E,19Z)-docosahexaenoate. It catalyses the reaction (7S)-hydroperoxy-(4Z,8E,10Z,13Z,16Z,19Z)-docosahexaenoate + O2 = (7S,14S)-dihydroperoxy-(4Z,8E,10Z,12E,16Z,19Z)-docosahexaenoate. The catalysed reaction is (7S)-hydroperoxy-(4Z,8E,10Z,13Z,16Z,19Z)-docosahexaenoate + O2 = (7S,17S)-dihydroperoxy-(4Z,8E,10Z,13Z,15E,19Z)-docosahexaenoate. It carries out the reaction (4Z,7Z,10Z,13Z,16Z,19Z)-docosahexaenoate + O2 = (11S)-hydroperoxy-(4Z,7Z,9E,13Z,16Z,19Z)-docosahexaenoate. The enzyme catalyses N-(5Z,8Z,11Z,14Z)-eicosatetraenoyl-taurine + O2 = N-(12S)-hydroperoxy-(5Z,8Z,10E,14Z)-eicosatetraenoyl-taurine. It catalyses the reaction N-(5Z,8Z,11Z,14Z)-eicosatetraenoyl-gamma-aminobutanoate + O2 = N-(12S)-hydroperoxy-(5Z,8Z,10E,14Z)-eicosatetraenoyl-gamma-aminobutanoate. The catalysed reaction is N-(5Z,8Z,11Z,14Z)-eicosatetraenoyl-glycine + O2 = N-(12S)-hydroperoxy-(5Z,8Z,10E,14Z)-eicosatetraenoyl-glycine. It carries out the reaction N-(5Z,8Z,11Z,14Z)-eicosatetraenoyl-L-alanine + O2 = N-(12S)-hydroperoxy-(5Z,8Z,10E,14Z)-eicosatetraenoyl-alanine. The enzyme catalyses N-(5Z,8Z,11Z,14Z)-eicosatetraenoyl-taurine + O2 = N-(15S)-hydroperoxy-(5Z,8Z,11Z,13E)-eicosatetraenoyl-taurine. It catalyses the reaction N-(5Z,8Z,11Z,14Z)-eicosatetraenoyl-gamma-aminobutanoate + O2 = N-(15S)-hydroperoxy-(5Z,8Z,11Z,13E)-eicosatetraenoyl-gamma-aminobutanoate. The catalysed reaction is N-(5Z,8Z,11Z,14Z)-eicosatetraenoyl-glycine + O2 = N-(15S)-hydroperoxy-(5Z,8Z,11Z,13E)-eicosatetraenoyl-glycine. It carries out the reaction N-(5Z,8Z,11Z,14Z)-eicosatetraenoyl-L-alanine + O2 = N-(15S)-hydroperoxy-(5Z,8Z,11Z,13E)-eicosatetraenoyl-alanine. It participates in lipid metabolism; hydroperoxy eicosatetraenoic acid biosynthesis. Functionally, non-heme iron-containing dioxygenase that catalyzes the stereo-specific peroxidation of free and esterified polyunsaturated fatty acids generating a spectrum of bioactive lipid mediators. It inserts peroxyl groups at C12 or C15 of arachidonate ((5Z,8Z,11Z,14Z)-eicosatetraenoate) producing both 12-hydroperoxyeicosatetraenoate/12-HPETE and 15-hydroperoxyeicosatetraenoate/15-HPETE. It may then act on 12-HPETE to produce hepoxilins, which may show pro-inflammatory properties. Can also peroxidize linoleate ((9Z,12Z)-octadecadienoate) to 13-hydroperoxyoctadecadienoate. May participate in the sequential oxidations of DHA ((4Z,7Z,10Z,13Z,16Z,19Z)-docosahexaenoate) to generate specialized pro-resolving mediators (SPMs)like resolvin D5 ((7S,17S)-diHPDHA) and (7S,14S)-diHPDHA, that actively down-regulate the immune response and have anti-aggregation properties with platelets. Can convert epoxy fatty acids to hydroperoxy-epoxides derivatives followed by an intramolecular nucleophilic substitution leading to the formation of monocyclic endoperoxides. Plays an important role during the maintenance of self-tolerance by peroxidizing membrane-bound phosphatidylethanolamine which can then signal the sorting process for clearance of apoptotic cells during inflammation and prevent an autoimmune response. In addition to its role in the immune and inflammatory responses, this enzyme may play a role in epithelial wound healing in the cornea through production of lipoxin A4 (LXA(4)) and docosahexaenoic acid-derived neuroprotectin D1 (NPD1; 10R,17S-HDHA), both lipid autacoids exhibit anti-inflammatory and neuroprotective properties. Furthermore, it may regulate actin polymerization which is crucial for several biological processes such as the phagocytosis of apoptotic cells. It is also implicated in the generation of endogenous ligands for peroxisome proliferator activated receptor (PPAR-gamma), hence modulating macrophage development and function. It may also exert a negative effect on skeletal development by regulating bone mass through this pathway. As well as participates in ER stress and downstream inflammation in adipocytes, pancreatic islets, and liver. Finally, it is also involved in the cellular response to IL13/interleukin-13. The protein is Polyunsaturated fatty acid lipoxygenase ALOX15 of Mus musculus (Mouse).